We begin with the raw amino-acid sequence, 478 residues long: Glycogen synthase (478 aa).

Residue Lys15 coordinates ADP-alpha-D-glucose.

This sequence belongs to the glycosyltransferase 1 family. Bacterial/plant glycogen synthase subfamily.

The catalysed reaction is [(1-&gt;4)-alpha-D-glucosyl](n) + ADP-alpha-D-glucose = [(1-&gt;4)-alpha-D-glucosyl](n+1) + ADP + H(+). Its pathway is glycan biosynthesis; glycogen biosynthesis. Functionally, synthesizes alpha-1,4-glucan chains using ADP-glucose. In Clostridium botulinum (strain Eklund 17B / Type B), this protein is Glycogen synthase.